We begin with the raw amino-acid sequence, 159 residues long: 2-C-methyl-D-erythritol 2,4-cyclodiphosphate synthase (159 aa).

2 residues coordinate a divalent metal cation: aspartate 10 and histidine 12. 4-CDP-2-C-methyl-D-erythritol 2-phosphate-binding positions include 10 to 12 (DVH) and 36 to 37 (HS). Histidine 44 is a binding site for a divalent metal cation. 4-CDP-2-C-methyl-D-erythritol 2-phosphate-binding positions include 58–60 (DIG), 134–137 (TTTE), phenylalanine 141, and arginine 144.

It belongs to the IspF family. In terms of assembly, homotrimer. The cofactor is a divalent metal cation.

It carries out the reaction 4-CDP-2-C-methyl-D-erythritol 2-phosphate = 2-C-methyl-D-erythritol 2,4-cyclic diphosphate + CMP. Its pathway is isoprenoid biosynthesis; isopentenyl diphosphate biosynthesis via DXP pathway; isopentenyl diphosphate from 1-deoxy-D-xylulose 5-phosphate: step 4/6. Functionally, involved in the biosynthesis of isopentenyl diphosphate (IPP) and dimethylallyl diphosphate (DMAPP), two major building blocks of isoprenoid compounds. Catalyzes the conversion of 4-diphosphocytidyl-2-C-methyl-D-erythritol 2-phosphate (CDP-ME2P) to 2-C-methyl-D-erythritol 2,4-cyclodiphosphate (ME-CPP) with a corresponding release of cytidine 5-monophosphate (CMP). The sequence is that of 2-C-methyl-D-erythritol 2,4-cyclodiphosphate synthase from Bacteroides fragilis (strain ATCC 25285 / DSM 2151 / CCUG 4856 / JCM 11019 / LMG 10263 / NCTC 9343 / Onslow / VPI 2553 / EN-2).